Here is a 512-residue protein sequence, read N- to C-terminus: 2-isopropylmalate synthase (512 aa).

Positions 4–266 (IQFFDTTLRD…ETNIVLNQFK (263 aa)) constitute a Pyruvate carboxyltransferase domain. The Mn(2+) site is built by Asp13, His201, His203, and Asn237. The interval 390 to 512 (ELKHLQVQYV…SKQADFEEVK (123 aa)) is regulatory domain.

Belongs to the alpha-IPM synthase/homocitrate synthase family. LeuA type 1 subfamily. As to quaternary structure, homodimer. It depends on Mn(2+) as a cofactor.

The protein resides in the cytoplasm. It carries out the reaction 3-methyl-2-oxobutanoate + acetyl-CoA + H2O = (2S)-2-isopropylmalate + CoA + H(+). The protein operates within amino-acid biosynthesis; L-leucine biosynthesis; L-leucine from 3-methyl-2-oxobutanoate: step 1/4. In terms of biological role, catalyzes the condensation of the acetyl group of acetyl-CoA with 3-methyl-2-oxobutanoate (2-ketoisovalerate) to form 3-carboxy-3-hydroxy-4-methylpentanoate (2-isopropylmalate). This Listeria monocytogenes serotype 4b (strain CLIP80459) protein is 2-isopropylmalate synthase.